Here is a 337-residue protein sequence, read N- to C-terminus: uncharacterized protein (337 aa).

2 consecutive transmembrane segments (helical) span residues 4–24 and 26–46; these read FIFF…FSLI and LLLW…LFAL.

The protein belongs to the plectrovirus ORF2 family.

It localises to the host membrane. This is an uncharacterized protein from Spiroplasma melliferum (SpV1).